The following is a 509-amino-acid chain: MDIRAAEISAILKDQIKNFGKEAEVSEVGQVLSVGDGIARVYGLDNVQAGEMVEFPGGIRGMALNLESDNVGVVIFGSDRDIKEGDTVKRTGAIVDVPVGPELLGRVVDALGNPIDGKGPINATRRSRVDVKAPGIIPRKSVHEPMSTGLKAIDALIPVGRGQRELVIGDRQTGKTAILLDAFLNQKAIHDNGPEGEKLYCVYVAVGQKRSTVAQFVKVLEERGALKYSIIVAATASDPAPMQFLAPFAGCAMGEYFRDNGMHALIGYDDLSKQAVSYRQMSLLLRRPPGREAYPGDVFYLHSRLLERAAKMNDDKGAGSLTALPVIETQGNDVSAFIPTNVISITDGQIFLETDLFYQGIRPAVNVGLSVSRVGSSAQIKAMKQVAGSIKGELAQYREMAAFAQFGSDLDAATQRLLNRGARLTELLKQPQFSPLKTEEQVAVIFAGVNGYLDKLPVASVGKFEQGFLSYLRSEGSAILDAIRTEKAISDDTKGKLTAALDSFAKSFS.

Residue 169–176 (GDRQTGKT) participates in ATP binding.

Belongs to the ATPase alpha/beta chains family. F-type ATPases have 2 components, CF(1) - the catalytic core - and CF(0) - the membrane proton channel. CF(1) has five subunits: alpha(3), beta(3), gamma(1), delta(1), epsilon(1). CF(0) has three main subunits: a(1), b(2) and c(9-12). The alpha and beta chains form an alternating ring which encloses part of the gamma chain. CF(1) is attached to CF(0) by a central stalk formed by the gamma and epsilon chains, while a peripheral stalk is formed by the delta and b chains.

It is found in the cell inner membrane. It carries out the reaction ATP + H2O + 4 H(+)(in) = ADP + phosphate + 5 H(+)(out). In terms of biological role, produces ATP from ADP in the presence of a proton gradient across the membrane. The alpha chain is a regulatory subunit. This is ATP synthase subunit alpha from Rhizobium leguminosarum bv. trifolii (strain WSM2304).